A 185-amino-acid polypeptide reads, in one-letter code: Ribosome-recycling factor (185 aa).

Belongs to the RRF family.

The protein localises to the cytoplasm. Responsible for the release of ribosomes from messenger RNA at the termination of protein biosynthesis. May increase the efficiency of translation by recycling ribosomes from one round of translation to another. This is Ribosome-recycling factor from Clostridium botulinum (strain Eklund 17B / Type B).